The chain runs to 358 residues: Peptide chain release factor 1 (358 aa).

N5-methylglutamine is present on Gln-233.

It belongs to the prokaryotic/mitochondrial release factor family. Post-translationally, methylated by PrmC. Methylation increases the termination efficiency of RF1.

The protein localises to the cytoplasm. In terms of biological role, peptide chain release factor 1 directs the termination of translation in response to the peptide chain termination codons UAG and UAA. This chain is Peptide chain release factor 1, found in Flavobacterium johnsoniae (strain ATCC 17061 / DSM 2064 / JCM 8514 / BCRC 14874 / CCUG 350202 / NBRC 14942 / NCIMB 11054 / UW101) (Cytophaga johnsonae).